Consider the following 878-residue polypeptide: Bifunctional heparan sulfate N-deacetylase/N-sulfotransferase 1 (878 aa).

Residues 1 to 17 (MSLSLKTRRFGRPVRPQ) lie on the Cytoplasmic side of the membrane. The tract at residues 1–169 (MSLSLKTRRF…VEYGVGIIGF (169 aa)) is sufficient for localization to Golgi membrane. The helical; Signal-anchor for type II membrane protein transmembrane segment at 18–38 (LVLLLLFALCLLSVFISAYYL) threads the bilayer. The Lumenal segment spans residues 39–878 (YGWKRGLEPS…WLREELQNTR (840 aa)). A heparan sulfate N-deacetylase 1 region spans residues 40 to 594 (GWKRGLEPSG…KRHKDIWSKE (555 aa)). N-linked (GlcNAc...) asparagine glycosylation is found at Asn231, Asn347, and Asn397. Residues 595-878 (KTCDRFPKLL…WLREELQNTR (284 aa)) form a heparan sulfate N-sulfotransferase 1 region. The active-site For sulfotransferase activity is the Lys610. Position 610-614 (610-614 (KTGTT)) interacts with adenosine 3',5'-bisphosphate. N-linked (GlcNAc...) asparagine glycosylation is present at Asn663. Positions 708 and 813 each coordinate adenosine 3',5'-bisphosphate. A disulfide bond links Cys814 and Cys824. 829-833 (KGRKY) lines the adenosine 3',5'-bisphosphate pocket.

The protein belongs to the sulfotransferase 1 family. NDST subfamily. Monomer.

It localises to the golgi apparatus membrane. The protein resides in the golgi apparatus. The protein localises to the trans-Golgi network membrane. It catalyses the reaction alpha-D-glucosaminyl-[heparan sulfate](n) + 3'-phosphoadenylyl sulfate = N-sulfo-alpha-D-glucosaminyl-[heparan sulfate](n) + adenosine 3',5'-bisphosphate + 2 H(+). The protein operates within glycan metabolism; heparan sulfate biosynthesis. It participates in glycan metabolism; heparin biosynthesis. Essential bifunctional enzyme that catalyzes both the N-deacetylation and the N-sulfation of glucosamine (GlcNAc) of the glycosaminoglycan in heparan sulfate. Modifies the GlcNAc-GlcA disaccharide repeating sugar backbone to make N-sulfated heparosan, a prerequisite substrate for later modifications in heparin biosynthesis. Plays a role in determining the extent and pattern of sulfation of heparan sulfate. The protein is Bifunctional heparan sulfate N-deacetylase/N-sulfotransferase 1 (ndst1) of Xenopus laevis (African clawed frog).